The following is a 201-amino-acid chain: Small ribosomal subunit protein uS4c (201 aa).

Residues 89–149 (MRLDNILFRL…DKPKSGALIK (61 aa)) form the S4 RNA-binding domain.

The protein belongs to the universal ribosomal protein uS4 family. Part of the 30S ribosomal subunit. Contacts protein S5. The interaction surface between S4 and S5 is involved in control of translational fidelity.

Its subcellular location is the plastid. Its function is as follows. One of the primary rRNA binding proteins, it binds directly to 16S rRNA where it nucleates assembly of the body of the 30S subunit. In terms of biological role, with S5 and S12 plays an important role in translational accuracy. The sequence is that of Small ribosomal subunit protein uS4c (rps4) from Cuscuta exaltata (Tall dodder).